A 98-amino-acid chain; its full sequence is Large ribosomal subunit protein eL30 (98 aa).

Belongs to the eukaryotic ribosomal protein eL30 family.

The sequence is that of Large ribosomal subunit protein eL30 from Methanosphaera stadtmanae (strain ATCC 43021 / DSM 3091 / JCM 11832 / MCB-3).